A 238-amino-acid chain; its full sequence is Deoxyribose-phosphate aldolase (238 aa).

Asp104 acts as the Proton donor/acceptor in catalysis. Lys168 (schiff-base intermediate with acetaldehyde) is an active-site residue. Lys197 serves as the catalytic Proton donor/acceptor.

Belongs to the DeoC/FbaB aldolase family. DeoC type 1 subfamily.

The protein localises to the cytoplasm. It carries out the reaction 2-deoxy-D-ribose 5-phosphate = D-glyceraldehyde 3-phosphate + acetaldehyde. Its pathway is carbohydrate degradation; 2-deoxy-D-ribose 1-phosphate degradation; D-glyceraldehyde 3-phosphate and acetaldehyde from 2-deoxy-alpha-D-ribose 1-phosphate: step 2/2. Functionally, catalyzes a reversible aldol reaction between acetaldehyde and D-glyceraldehyde 3-phosphate to generate 2-deoxy-D-ribose 5-phosphate. The sequence is that of Deoxyribose-phosphate aldolase from Bacteroides thetaiotaomicron (strain ATCC 29148 / DSM 2079 / JCM 5827 / CCUG 10774 / NCTC 10582 / VPI-5482 / E50).